Here is a 224-residue protein sequence, read N- to C-terminus: Cerebellin-2 (224 aa).

The signal sequence occupies residues 1–51 (MQAPGRGPLGLRLMMPGRRGALREPGGCGSCLGVALALLLLLLPACCPVRA). 2 N-linked (GlcNAc...) asparagine glycosylation sites follow: N53 and N110. The C1q domain maps to 88-224 (SGSAKVAFSA…TFSGFLVFPL (137 aa)).

As to quaternary structure, homohexamer; disulfide-linked homotrimers. The trimers are assembled via the globular C1q domains. The trimers associate via N-terminal cysteine residues to form disulfide-linked hexamers. May form homooligomers or heterooligomers with CBLN1 and CBLN3 prior to secretion. Once secreted, does not interact with other CBLN family members. Interacts with GRID2, and more weakly with GRID1. Interacts with NRXN1 and NRXN2 long and short isoforms produced by alternative promoter usage. Weakly interacts with NRXN3 short isoform and not at all with NRXN3 long isoform.

It is found in the secreted. In terms of biological role, acts as a synaptic organizer in specific subsets of neurons in the brain. Essential for long-term maintenance but not establishment of excitatory synapses. Functions as part of a trans-synaptic complex by binding to postsynaptic GRID1 and presynaptic neurexins. This interaction helps regulate the activity of NMDA and AMPA receptors at hippocampal synapses without affecting synapse formation. NRXN1B-CBLN2-GRID1 complex transduce presynaptic signals into postsynaptic NMDAR response. NRXN3B-CBLN2-GRID1 complex transduce presynaptic signals into postsynaptic AMPAR response. This chain is Cerebellin-2, found in Homo sapiens (Human).